The primary structure comprises 441 residues: Leucine-rich repeat-containing protein 17 (441 aa).

An N-terminal signal peptide occupies residues 1–18 (MRVVTIVILLCFCKAAEL). LRR repeat units lie at residues 82 to 103 (DLLH…MFSK), 106 to 127 (KLKS…AFFG), and 130 to 151 (KLTT…VFIY). Residues 163 to 214 (NPWHCTCEIETLISMLQIPRNRNLGNYAKCESPQEQKNKKLRQIKSEQLCNE) form the LRRCT 1 domain. The region spanning 225-268 (QVSGRPPVIKPEVDSTFCHNYVFPIQTLDCKRKELKKVPNNIPP) is the LRRNT domain. 3 LRR repeats span residues 269-290 (DIVK…EFED), 293-314 (ELKK…AFLG), and 317-340 (HLEE…EDLY). In terms of domain architecture, LRRCT 2 spans 350-402 (NPWRCDYNIHYLYYWLKHHYNVHFNGLECKTPEEYKGWSVGKYIRSYYEECPK).

Expressed in osteoblast cell lines. Well expressed in ovary, heart, pancreas, skeletal muscle, lung, and fetal kidney and lung and only at the basal levels in the other tissues examined including adult kidney. More expressed in S-type neuroblastoma cells than in N-type neuroblastoma cells.

It is found in the secreted. It localises to the extracellular space. In terms of biological role, involved in bone homeostasis. Acts as a negative regulator of RANKL-induced osteoclast precursor differentiation from bone marrow precursors. The polypeptide is Leucine-rich repeat-containing protein 17 (LRRC17) (Homo sapiens (Human)).